The chain runs to 346 residues: Putative [LysW]-L-2-aminoadipate/[LysW]-L-glutamate phosphate reductase (346 aa).

Position 12-15 (12-15) interacts with NADP(+); that stretch reads SGFT. Residue C147 is part of the active site. An NADP(+)-binding site is contributed by N310.

It belongs to the NAGSA dehydrogenase family. Type 1 subfamily. LysY sub-subfamily.

It is found in the cytoplasm. The enzyme catalyses [amino-group carrier protein]-C-terminal-N-(1-carboxy-5-oxopentan-1-yl)-L-glutamine + phosphate + NADP(+) = [amino-group carrier protein]-C-terminal-N-(1-carboxy-5-phosphooxy-5-oxopentan-1-yl)-L-glutamine + NADPH + H(+). It catalyses the reaction [amino-group carrier protein]-C-terminal-gamma-(L-glutamyl-5-semialdehyde)-L-glutamate + phosphate + NADP(+) = [amino-group carrier protein]-C-terminal-gamma-(5-phospho-L-glutamyl)-L-glutamate + NADPH + H(+). It functions in the pathway amino-acid biosynthesis; L-lysine biosynthesis via AAA pathway; L-lysine from L-alpha-aminoadipate (Thermus route): step 3/5. Its pathway is amino-acid biosynthesis; L-arginine biosynthesis. Involved in both the arginine and lysine biosynthetic pathways. This Natronomonas pharaonis (strain ATCC 35678 / DSM 2160 / CIP 103997 / JCM 8858 / NBRC 14720 / NCIMB 2260 / Gabara) (Halobacterium pharaonis) protein is Putative [LysW]-L-2-aminoadipate/[LysW]-L-glutamate phosphate reductase.